Consider the following 31-residue polypeptide: Cytochrome b6-f complex subunit 6 (31 aa).

A helical transmembrane segment spans residues 4 to 24; it reads LTSYFGFLLAALTITFVLFIG.

It belongs to the PetL family. The 4 large subunits of the cytochrome b6-f complex are cytochrome b6, subunit IV (17 kDa polypeptide, PetD), cytochrome f and the Rieske protein, while the 4 small subunits are PetG, PetL, PetM and PetN. The complex functions as a dimer.

Its subcellular location is the plastid. It is found in the chloroplast thylakoid membrane. Component of the cytochrome b6-f complex, which mediates electron transfer between photosystem II (PSII) and photosystem I (PSI), cyclic electron flow around PSI, and state transitions. PetL is important for photoautotrophic growth as well as for electron transfer efficiency and stability of the cytochrome b6-f complex. This chain is Cytochrome b6-f complex subunit 6, found in Oxybasis rubra (Red goosefoot).